The chain runs to 509 residues: uncharacterized protein (509 aa).

The protein belongs to the MG032/MG096/MG288 family.

This is an uncharacterized protein from Mycoplasma pneumoniae (strain ATCC 29342 / M129 / Subtype 1) (Mycoplasmoides pneumoniae).